The chain runs to 427 residues: Trigger factor (427 aa).

The 81-residue stretch at 160–240 (TDTVIGDVEK…VKEVKRLELP (81 aa)) folds into the PPIase FKBP-type domain.

It belongs to the FKBP-type PPIase family. Tig subfamily.

The protein resides in the cytoplasm. It catalyses the reaction [protein]-peptidylproline (omega=180) = [protein]-peptidylproline (omega=0). Its function is as follows. Involved in protein export. Acts as a chaperone by maintaining the newly synthesized protein in an open conformation. Functions as a peptidyl-prolyl cis-trans isomerase. This is Trigger factor from Chlorobium phaeobacteroides (strain DSM 266 / SMG 266 / 2430).